Consider the following 464-residue polypeptide: MSDLVPLSRKPAPAAGGPAPSPAAPPRKVYVHTFGCQMNESDSDRMVELLGRHAYARAASADEADLILLNTCAVREKAEQKLLSALGRYREVKARRGALIAVSGCVAQQEKDRLLARVPYVDFVFGPDNIGRLPEMVERARDERFAETGWMDSEEYVFPRADPEAARGRVTAFVTAMKGCDNVCAFCIVPHTRGREVSRPFPDVVAECAALAGVGVREVTLIGQNVNSYTGGCTFADLLRRVAAVPGIDRIRFTTSHPHDLSDALVEVFRDEPKVMPHFHLPVQSGSDAVLRRMRRDYSVAEYLDRFDRLRAARPGIAITTDFIVGFPGETDADFEASLALLERARFEQSFSFVFSPRPHTVAAVRLGSAPEWRDVPREAAVARLERLLAAQRRIAGEILAGELGKVVEVLVEGPSDEPGERLGRTPENRVVHLAADEAAAPAGARVAVRITRAGGSSLSGTLA.

The disordered stretch occupies residues 1 to 24 (MSDLVPLSRKPAPAAGGPAPSPAA). Over residues 8–18 (SRKPAPAAGGP) the composition is skewed to low complexity. The MTTase N-terminal domain maps to 27 to 142 (RKVYVHTFGC…LPEMVERARD (116 aa)). [4Fe-4S] cluster is bound by residues C36, C72, C105, C180, C184, and C187. A Radical SAM core domain is found at 166-398 (ARGRVTAFVT…LAAQRRIAGE (233 aa)). Residues 401–464 (AGELGKVVEV…GGSSLSGTLA (64 aa)) form the TRAM domain.

The protein belongs to the methylthiotransferase family. MiaB subfamily. As to quaternary structure, monomer. The cofactor is [4Fe-4S] cluster.

The protein resides in the cytoplasm. The catalysed reaction is N(6)-dimethylallyladenosine(37) in tRNA + (sulfur carrier)-SH + AH2 + 2 S-adenosyl-L-methionine = 2-methylsulfanyl-N(6)-dimethylallyladenosine(37) in tRNA + (sulfur carrier)-H + 5'-deoxyadenosine + L-methionine + A + S-adenosyl-L-homocysteine + 2 H(+). In terms of biological role, catalyzes the methylthiolation of N6-(dimethylallyl)adenosine (i(6)A), leading to the formation of 2-methylthio-N6-(dimethylallyl)adenosine (ms(2)i(6)A) at position 37 in tRNAs that read codons beginning with uridine. The chain is tRNA-2-methylthio-N(6)-dimethylallyladenosine synthase from Anaeromyxobacter sp. (strain K).